A 405-amino-acid polypeptide reads, in one-letter code: MGALTIVAKYMIVAQIEVNGSVDKSDIIGALFSQTEGLLGKDMDLRELQMMGRIGRIEVDIFEKNGKTKAKIYIPSNLDRYETALVAALVESIERVGPYPASVKVIEIRDLREEKRKKIIEKAKELVKLIEEEILPDTKEIIERLKEDVAKAEVVEYGPERLPAGPDVDKSDAIIIVEGRADVVNLVKHGYRNVIALEGISRGVPQTIIDLSKKKNVTVFIDGDKGGELVLKELLKVAHVDYIARAPPGKEVEQLTAKEIAKALRNKISLEEWLAQQKASGERAEAPPQPAQQPQQEQPAPQRPIQAPFDLEKKIEEMLGTLEAEIYDQNWTLVKRLPVRELPDFLATSGDSIYAIILDGITTQRIVDLAAKKGVKVIITARTGPLTKVPEDMSIYTFEQLKKTE.

Positions 172 to 248 (DAIIIVEGRA…HVDYIARAPP (77 aa)) constitute a Toprim domain. The Mg(2+) site is built by glutamate 178, aspartate 222, and aspartate 224. Residues 279-303 (ASGERAEAPPQPAQQPQQEQPAPQR) are disordered. The segment covering 292–303 (QQPQQEQPAPQR) has biased composition (low complexity).

The protein belongs to the archaeal DnaG primase family. Forms a ternary complex with MCM helicase and DNA. Component of the archaeal exosome complex. The cofactor is Mg(2+).

It carries out the reaction ssDNA + n NTP = ssDNA/pppN(pN)n-1 hybrid + (n-1) diphosphate.. RNA polymerase that catalyzes the synthesis of short RNA molecules used as primers for DNA polymerase during DNA replication. Also part of the exosome, which is a complex involved in RNA degradation. Acts as a poly(A)-binding protein that enhances the interaction between heteromeric, adenine-rich transcripts and the exosome. This chain is DNA primase DnaG, found in Pyrobaculum arsenaticum (strain DSM 13514 / JCM 11321 / PZ6).